The sequence spans 61 residues: Small ribosomal subunit protein uS14 (61 aa).

The Zn(2+) site is built by cysteine 24, cysteine 27, cysteine 40, and cysteine 43.

This sequence belongs to the universal ribosomal protein uS14 family. Zinc-binding uS14 subfamily. In terms of assembly, part of the 30S ribosomal subunit. Contacts proteins S3 and S10. Requires Zn(2+) as cofactor.

Functionally, binds 16S rRNA, required for the assembly of 30S particles and may also be responsible for determining the conformation of the 16S rRNA at the A site. The protein is Small ribosomal subunit protein uS14 of Thermosipho melanesiensis (strain DSM 12029 / CIP 104789 / BI429).